The chain runs to 30 residues: Poly-His-poly-Gly peptide 2 (30 aa).

Basic residues predominate over residues 1–18; sequence EDDHDHHHHHHHHHHHHG. Residues 1 to 30 are disordered; sequence EDDHDHHHHHHHHHHHHGVGGGGGGGGGGA. Over residues 19–30 the composition is skewed to gly residues; the sequence is VGGGGGGGGGGA.

Expressed by the venom gland.

The protein resides in the secreted. Functionally, may serve as a metalloproteinase inhibitor during glandular storage. Their inhibition may be instantly disengaged, by dilution or physiochemical change, when venom is injected into tissue of the victim. This chain is Poly-His-poly-Gly peptide 2, found in Atheris nitschei (Great lakes bush viper).